Reading from the N-terminus, the 295-residue chain is Non-selective voltage-gated ion channel VDAC2 (295 aa).

ATP-binding residues include Lys-24 and Lys-32. Lys-32 carries the N6-acetyllysine; alternate modification. Position 32 is an N6-succinyllysine; alternate (Lys-32). Lys-32 participates in a covalent cross-link: Glycyl lysine isopeptide (Lys-Gly) (interchain with G-Cter in ubiquitin); alternate. Beta stranded transmembrane passes span Leu-38–Thr-45 and Val-51–Asn-60. A Glycyl lysine isopeptide (Lys-Gly) (interchain with G-Cter in ubiquitin) cross-link involves residue Lys-65. The chain crosses the membrane as a beta stranded span at residues Val-66–Trp-76. At Tyr-79 the chain carries Phosphotyrosine. 3 consecutive transmembrane segments (beta stranded) span residues Leu-81–Asn-88, Thr-92–Glu-100, and Leu-107–Ser-116. Position 119 is a phosphothreonine (Thr-119). An N6-acetyllysine; alternate modification is found at Lys-121. Residue Lys-121 forms a Glycyl lysine isopeptide (Lys-Gly) (interchain with G-Cter in ubiquitin); alternate linkage. Lys-122 is covalently cross-linked (Glycyl lysine isopeptide (Lys-Gly) (interchain with G-Cter in ubiquitin)). Transmembrane regions (beta stranded) follow at residues Lys-122–Lys-131, Ile-135–Asp-144, Pro-148–Gly-157, and Trp-161–Asp-170. Lys-173 participates in a covalent cross-link: Glycyl lysine isopeptide (Lys-Gly) (interchain with G-Cter in ubiquitin). The next 6 membrane-spanning stretches (beta stranded) occupy residues Thr-177 to Thr-187, Phe-190 to Asn-197, Glu-201 to Val-210, Phe-214 to Trp-222, Thr-229 to Gln-238, and Ala-243 to Asn-250. The residue at position 252 (Ser-252) is a Phosphoserine. Residues Leu-254–Gly-256 and Ser-272–Asp-276 each bind NAD(+). 2 beta stranded membrane passes run Leu-254–Leu-263 and Val-267–Val-275. Lys-278 bears the N6-acetyllysine; alternate mark. Residue Lys-278 forms a Glycyl lysine isopeptide (Lys-Gly) (interchain with G-Cter in ubiquitin); alternate linkage. Residues His-285–Ala-295 form a beta stranded membrane-spanning segment.

It belongs to the eukaryotic mitochondrial porin family. Monomer, homodimer and higher order oligomers; formation of higher order structures is necessary for scramblase activity. Interacts with ARMC12 in a TBC1D21-dependent manner. Interacts with KLC3. Interacts with SPATA33. Interacts with PPP3CC in a SPATA33-dependent manner. Post-translationally, ubiquitinated by PRKN during mitophagy, leading to its degradation and enhancement of mitophagy. Deubiquitinated by USP30. Highest levels of expression detected in testis, less but still abundant expression in heart, kidney, brain, and skeletal muscle. Expressed in the sperm midpiece (at protein level).

The protein localises to the mitochondrion outer membrane. Its subcellular location is the membrane. It carries out the reaction chloride(in) = chloride(out). The catalysed reaction is K(+)(in) = K(+)(out). The enzyme catalyses a 1,2-diacyl-sn-glycero-3-phospho-L-serine(in) = a 1,2-diacyl-sn-glycero-3-phospho-L-serine(out). It catalyses the reaction a 1,2-diacyl-sn-glycero-3-phosphocholine(in) = a 1,2-diacyl-sn-glycero-3-phosphocholine(out). It carries out the reaction a 1,2-diacyl-sn-glycero-3-phospho-(1D-myo-inositol)(in) = a 1,2-diacyl-sn-glycero-3-phospho-(1D-myo-inositol)(out). In terms of biological role, non-selective voltage-gated ion channel that mediates the transport of anions and cations through the mitochondrion outer membrane and plasma membrane. The channel adopts an open conformation at zero mV and a closed conformation at both positive and negative potentials. There are two populations of channels; the main that functions in a lower open-state conductance with lower ion selectivity, that switch, in a voltage-dependent manner, from the open to a low-conducting 'closed' state and the other that has a normal ion selectivity in the typical high conductance, 'open' state. Binds various lipids, including the sphingolipid ceramide, the phospholipid phosphatidylcholine, and the sterols cholesterol and oxysterol. Binding of ceramide promotes the mitochondrial outer membrane permeabilization (MOMP) apoptotic pathway. Its function is as follows. Catalyzes the scrambling of phospholipids across the outer mitochondrial membrane; the mechanism is unrelated to channel activity and is capable of translocating both anionic and zwitterionic phospholipids. The polypeptide is Non-selective voltage-gated ion channel VDAC2 (Mus musculus (Mouse)).